A 255-amino-acid chain; its full sequence is NAD kinase (255 aa).

Residue Asp44 is the Proton acceptor of the active site. Residues 44–45 (DG), His49, 114–115 (NE), Asp144, Ala152, 155–160 (SAYNLS), and Gln216 contribute to the NAD(+) site.

It belongs to the NAD kinase family. A divalent metal cation is required as a cofactor.

Its subcellular location is the cytoplasm. It catalyses the reaction NAD(+) + ATP = ADP + NADP(+) + H(+). Functionally, involved in the regulation of the intracellular balance of NAD and NADP, and is a key enzyme in the biosynthesis of NADP. Catalyzes specifically the phosphorylation on 2'-hydroxyl of the adenosine moiety of NAD to yield NADP. The sequence is that of NAD kinase from Rickettsia prowazekii (strain Madrid E).